A 276-amino-acid polypeptide reads, in one-letter code: 2-dehydro-3-deoxyphosphooctonate aldolase (276 aa).

Belongs to the KdsA family.

The protein resides in the cytoplasm. It catalyses the reaction D-arabinose 5-phosphate + phosphoenolpyruvate + H2O = 3-deoxy-alpha-D-manno-2-octulosonate-8-phosphate + phosphate. It participates in carbohydrate biosynthesis; 3-deoxy-D-manno-octulosonate biosynthesis; 3-deoxy-D-manno-octulosonate from D-ribulose 5-phosphate: step 2/3. Its pathway is bacterial outer membrane biogenesis; lipopolysaccharide biosynthesis. The chain is 2-dehydro-3-deoxyphosphooctonate aldolase from Helicobacter pylori (strain HPAG1).